A 92-amino-acid polypeptide reads, in one-letter code: DNA-directed RNA polymerase subunit omega (92 aa).

This sequence belongs to the RNA polymerase subunit omega family. As to quaternary structure, the RNAP catalytic core consists of 2 alpha, 1 beta, 1 beta' and 1 omega subunit. When a sigma factor is associated with the core the holoenzyme is formed, which can initiate transcription.

It carries out the reaction RNA(n) + a ribonucleoside 5'-triphosphate = RNA(n+1) + diphosphate. Functionally, promotes RNA polymerase assembly. Latches the N- and C-terminal regions of the beta' subunit thereby facilitating its interaction with the beta and alpha subunits. The protein is DNA-directed RNA polymerase subunit omega of Shewanella sp. (strain ANA-3).